Consider the following 159-residue polypeptide: MSKKPADGRKVIATNRKARHNYSIIDVYEAGVQLVGTEVKTLREGKASLVDAFATVDDGEVWLRGVHIPQYDHGTWTNHAPLRNRKLLLHRAQIDMLVGKTRDGNLTLVPLSLYFLDGKVKVELALARGKQAHDKRQDIAKRDASREITRELGRRAKGM.

The protein belongs to the SmpB family.

The protein localises to the cytoplasm. Its function is as follows. Required for rescue of stalled ribosomes mediated by trans-translation. Binds to transfer-messenger RNA (tmRNA), required for stable association of tmRNA with ribosomes. tmRNA and SmpB together mimic tRNA shape, replacing the anticodon stem-loop with SmpB. tmRNA is encoded by the ssrA gene; the 2 termini fold to resemble tRNA(Ala) and it encodes a 'tag peptide', a short internal open reading frame. During trans-translation Ala-aminoacylated tmRNA acts like a tRNA, entering the A-site of stalled ribosomes, displacing the stalled mRNA. The ribosome then switches to translate the ORF on the tmRNA; the nascent peptide is terminated with the 'tag peptide' encoded by the tmRNA and targeted for degradation. The ribosome is freed to recommence translation, which seems to be the essential function of trans-translation. This chain is SsrA-binding protein, found in Mycobacteroides abscessus (strain ATCC 19977 / DSM 44196 / CCUG 20993 / CIP 104536 / JCM 13569 / NCTC 13031 / TMC 1543 / L948) (Mycobacterium abscessus).